The following is a 470-amino-acid chain: MADRLRELTQTRLQKIWIPHQCDRLQQRRGSSIPQFTNSPTMIVMVGLPARGKTYISKKLTRYLNWIGTPTKVFNVGQYRRDATQSYNNYQFFRADNQEAMKIRKQCALHALKDVHTYLSREEGHVAVFDATNTTRERRSVILQFAKERGYKVFFIESICDDPDIIAENITQVKLSSPDYTGCDREKVLEDFLKRIDCYQMNYEPLHDDLDSSLSYIKIFNVGSRYLVNRVQDHIQSRAVYYLMNIHVTPRSIYLSRHGESELNLLGRIGGDSGLSVRGKQYAHELGNFIKSQQIPDLKVWTSHMKRTIQTAEALHVPYEQWKALNEIDAGVCEEMTYEEIQDHFPEEFALRDQDKYRYRYPKGESYEDIVQRLEPVIMELERQENVLVICHQAVMRCLLAYFLDKTAEELPYLKCPLHTVLKLTPVAYGCKVESIYLNIEAVNTHREKPLNVEVSRDPEEALDTVPEHF.

A 6-phosphofructo-2-kinase region spans residues methionine 1–threonine 249. At serine 31 the chain carries Phosphoserine; by PKA. Residue glycine 47 to tyrosine 55 participates in ATP binding. The beta-D-fructose 6-phosphate site is built by arginine 80 and arginine 104. Aspartate 130 is an active-site residue. Residues threonine 132 and arginine 138 each contribute to the beta-D-fructose 6-phosphate site. Cysteine 160 is an active-site residue. Asparagine 169–lysine 174 is an ATP binding site. Beta-D-fructose 6-phosphate-binding residues include lysine 174, arginine 195, and tyrosine 199. Residues proline 250–phenylalanine 470 are fructose-2,6-bisphosphatase. Arginine 257 contacts beta-D-fructose 2,6-bisphosphate. The Tele-phosphohistidine intermediate role is filled by histidine 258. Asparagine 264 and glycine 270 together coordinate beta-D-fructose 2,6-bisphosphate. Glutamate 327 acts as the Proton donor/acceptor in catalysis. Beta-D-fructose 2,6-bisphosphate is bound by residues tyrosine 338, arginine 352, lysine 356, tyrosine 367, glutamine 393, and arginine 397. Phenylalanine 349–arginine 352 provides a ligand contact to ATP. ATP contacts are provided by residues glutamine 393–arginine 397 and tyrosine 429.

This sequence in the C-terminal section; belongs to the phosphoglycerate mutase family. In terms of assembly, homodimer.

It carries out the reaction beta-D-fructose 2,6-bisphosphate + H2O = beta-D-fructose 6-phosphate + phosphate. It catalyses the reaction beta-D-fructose 6-phosphate + ATP = beta-D-fructose 2,6-bisphosphate + ADP + H(+). Its activity is regulated as follows. Phosphorylation results in inhibition of the kinase activity. Functionally, synthesis and degradation of fructose 2,6-bisphosphate. This Aquarana catesbeiana (American bullfrog) protein is 6-phosphofructo-2-kinase/fructose-2,6-bisphosphatase.